We begin with the raw amino-acid sequence, 311 residues long: Serine/threonine-protein phosphatase 4 catalytic subunit A (311 aa).

Aspartate 58, histidine 60, aspartate 86, and asparagine 118 together coordinate Mn(2+). Histidine 119 acts as the Proton donor in catalysis. Residues histidine 168 and histidine 242 each contribute to the Mn(2+) site. Leucine 311 is subject to Leucine methyl ester.

The protein belongs to the PPP phosphatase family. PP-4 (PP-X) subfamily. Serine/threonine-protein phosphatase 4 (PP4) occurs in different assemblies of the catalytic and one or more regulatory subunits. The cofactor is Mn(2+).

It localises to the cytoplasm. The protein localises to the cytoskeleton. It is found in the microtubule organizing center. The protein resides in the centrosome. It carries out the reaction O-phospho-L-seryl-[protein] + H2O = L-seryl-[protein] + phosphate. It catalyses the reaction O-phospho-L-threonyl-[protein] + H2O = L-threonyl-[protein] + phosphate. Its function is as follows. Protein phosphatase that regulates many processes such as microtubule organization at centrosomes. In Danio rerio (Zebrafish), this protein is Serine/threonine-protein phosphatase 4 catalytic subunit A (ppp4ca).